Consider the following 1941-residue polypeptide: Myosin-2 (1941 aa).

A Myosin N-terminal SH3-like domain is found at 33-82; sequence DAKTSVFVAEPKESFVKGTIQSREGGKVTVKTEGGATLTVKDDQVFPMNP. Phosphothreonine is present on residues Thr-64 and Thr-69. The 699-residue stretch at 86–784 folds into the Myosin motor domain; it reads DKIEDMAMMT…LLGLLEEMRD (699 aa). At Lys-130 the chain carries N6,N6,N6-trimethyllysine. Position 179–186 (179–186) interacts with ATP; sequence GESGAGKT. Phosphotyrosine is present on Tyr-389. A Phosphoserine modification is found at Ser-392. Thr-419 carries the phosphothreonine modification. Ser-625 bears the Phosphoserine mark. Residues 661–683 are actin-binding; the sequence is LNKLMTNLRSTHPHFVRCIIPNE. His-759 carries the pros-methylhistidine modification. The segment at 763–777 is actin-binding; the sequence is KFGHTKVFFKAGLLG. In terms of domain architecture, IQ spans 787–816; that stretch reads LAQLITRTQARCRGFLARVEYQRMVERREA. Positions 845–1941 form a coiled coil; it reads LLKSAETEKE…EVHTKVISEE (1097 aa). A phosphoserine mark is found at Ser-1094 and Ser-1098. 2 disordered regions span residues 1128-1149 and 1155-1174; these read IEAE…SREL and RLEE…KKRE. The span at 1130 to 1149 shows a compositional bias: basic and acidic residues; sequence AERASRAKAEKQRSDLSREL. A phosphoserine mark is found at Ser-1164 and Ser-1239. Thr-1243 is subject to Phosphothreonine. Ser-1245 carries the post-translational modification Phosphoserine. Thr-1257 bears the Phosphothreonine mark. Position 1263 is a phosphoserine (Ser-1263). Thr-1288 bears the Phosphothreonine mark. Ser-1290, Ser-1294, Ser-1305, and Ser-1308 each carry phosphoserine. Thr-1469 carries the post-translational modification Phosphothreonine. Ser-1476 carries the post-translational modification Phosphoserine. Tyr-1494 carries the post-translational modification Phosphotyrosine. At Ser-1497 the chain carries Phosphoserine. Residue Thr-1503 is modified to Phosphothreonine. Phosphoserine is present on Ser-1516. Thr-1519 is subject to Phosphothreonine. Phosphoserine occurs at positions 1556, 1576, 1602, 1605, 1716, and 1728. Residues Thr-1732 and Thr-1738 each carry the phosphothreonine modification. The residue at position 1741 (Ser-1741) is a Phosphoserine.

This sequence belongs to the TRAFAC class myosin-kinesin ATPase superfamily. Myosin family. As to quaternary structure, muscle myosin is a hexameric protein that consists of 2 heavy chain subunits (MHC), 2 alkali light chain subunits (MLC) and 2 regulatory light chain subunits (MLC-2). Interacts with GCSAM.

The protein localises to the cytoplasm. The protein resides in the myofibril. Functionally, myosins are actin-based motor molecules with ATPase activity essential for muscle contraction. This is Myosin-2 from Homo sapiens (Human).